The following is a 121-amino-acid chain: LOB domain-containing protein 23 (121 aa).

The 102-residue stretch at 4 to 105 (KRCAACKYLR…NELAKTQAEI (102 aa)) folds into the LOB domain.

Belongs to the LOB domain-containing protein family.

The protein is LOB domain-containing protein 23 (LBD23) of Arabidopsis thaliana (Mouse-ear cress).